A 261-amino-acid polypeptide reads, in one-letter code: MDTRLIAIATFVVTFGILIVLKRLNYIESWDTFSILSILAAVLTIAAYFFTLVLFPQDYDQLKKEILDEINESLKNYEIYFKCKDFKKPIVKDGAVRIDKCVVMATKLNLTDHGYIVDLKFRSNWMDSKGTHAILFIDGDDAQINLFEREGEIFYIIKSKNKISGVYIQLKSVKWFDEAFSDNWNNIKIMWDTSKDEIWLEINGIRVSKKLNFDFNLNDSVIYLGSNPLEDTYAEGYFDRIMVYKSADTADFGTPTVRRFE.

2 helical membrane passes run 4–21 and 33–55; these read RLIAIATFVVTFGILIVL and FSILSILAAVLTIAAYFFTLVLF.

It is found in the cell membrane. This is an uncharacterized protein from Archaeoglobus fulgidus (strain ATCC 49558 / DSM 4304 / JCM 9628 / NBRC 100126 / VC-16).